We begin with the raw amino-acid sequence, 598 residues long: Elongation factor 4 (598 aa).

Residues 2–184 (TKIRNFSIIA…AVVDRIPPPS (183 aa)) form the tr-type G domain. Residues 14–19 (DHGKST) and 131–134 (NKID) each bind GTP.

Belongs to the TRAFAC class translation factor GTPase superfamily. Classic translation factor GTPase family. LepA subfamily.

It is found in the cell inner membrane. The enzyme catalyses GTP + H2O = GDP + phosphate + H(+). In terms of biological role, required for accurate and efficient protein synthesis under certain stress conditions. May act as a fidelity factor of the translation reaction, by catalyzing a one-codon backward translocation of tRNAs on improperly translocated ribosomes. Back-translocation proceeds from a post-translocation (POST) complex to a pre-translocation (PRE) complex, thus giving elongation factor G a second chance to translocate the tRNAs correctly. Binds to ribosomes in a GTP-dependent manner. This chain is Elongation factor 4, found in Syntrophobacter fumaroxidans (strain DSM 10017 / MPOB).